The chain runs to 304 residues: Hairy/enhancer-of-split related with YRPW motif protein 1 (304 aa).

Positions 1–52 are disordered; that stretch reads MKRAHPEYSSSESELDETIEVEKESADENGNLSSALGSMSPTTSSQILARKR. The segment covering 28 to 47 has biased composition (polar residues); that stretch reads ENGNLSSALGSMSPTTSSQI. Residues 48–117 are transcriptional repression and interaction with NCOR1 and SIN3A; sequence LARKRRRGII…GGKGYFDAHA (70 aa). Positions 49–104 constitute a bHLH domain; sequence ARKRRRGIIEKRRRDRINNSLSELRRLVPSAFEKQGSAKLEKAEILQMTVDHLKML. The region spanning 122 to 158 is the Orange domain; that stretch reads YRSLGFRECLAEVARYLSIIEGLDASDPLRVRLVSHL. A compositionally biased stretch (polar residues) spans 197-211; it reads SQSTHGNTGTSASPT. The disordered stretch occupies residues 197-234; sequence SQSTHGNTGTSASPTESHHQGRLATAHPEASALRAPPS. A YRPW motif motif is present at residues 294-297; it reads YRPW.

Belongs to the HEY family. In terms of assembly, self-associates. Interacts with HES1 and HEYL. Interacts with HDAC1, NCOR1 and SIN3A. Interacts with GATA4 and GATA6. Interacts with CCDC89/BOIP.

It localises to the nucleus. Functionally, transcriptional repressor which binds preferentially to the canonical E box sequence 5'-CACGTG-3'. Downstream effector of Notch signaling required for cardiovascular development. Specifically required for the Notch-induced endocardial epithelial to mesenchymal transition, which is itself criticial for cardiac valve and septum development. May be required in conjunction with HEY2 to specify arterial cell fate or identity. Promotes maintenance of neuronal precursor cells and glial versus neuronal fate specification. Represses transcription by the cardiac transcriptional activators GATA4 and GATA6 and by the neuronal bHLH factors ASCL1/MASH1 and NEUROD4/MATH3. This is Hairy/enhancer-of-split related with YRPW motif protein 1 (HEY1) from Bos taurus (Bovine).